Reading from the N-terminus, the 531-residue chain is Transporter mfs1 (531 aa).

Helical transmembrane passes span 83–103 (LVVT…SAIF), 119–139 (VPVI…PLIF), 158–178 (LIVF…GVLL), 182–202 (FLAG…LADI), 214–234 (FWSL…AAMV), 241–261 (WQFW…TFFM), 325–345 (IYIG…PILF), 358–378 (LVYM…FIYL), 398–418 (ILII…WFGW), and 424–444 (VHWI…FLLF). Asn486 carries an N-linked (GlcNAc...) asparagine glycan. Residues 496–516 (GWGSTILGVISCIMIPIPFLI) traverse the membrane as a helical segment.

Belongs to the major facilitator superfamily. CAR1 family.

It is found in the endoplasmic reticulum. Its subcellular location is the membrane. This Schizosaccharomyces pombe (strain 972 / ATCC 24843) (Fission yeast) protein is Transporter mfs1 (mfs1).